Reading from the N-terminus, the 368-residue chain is L-lactate oxidase (368 aa).

Residues valine 13–alanine 368 enclose the FMN hydroxy acid dehydrogenase domain. Tyrosine 39 contributes to the pyruvate binding site. Residues proline 92–alanine 94, serine 121, and glutamine 143 each bind FMN. Tyrosine 145 lines the pyruvate pocket. FMN is bound at residue threonine 171. Residue arginine 180 coordinates pyruvate. The FMN site is built by lysine 239 and serine 261. Histidine 263 and arginine 266 together coordinate pyruvate. Catalysis depends on histidine 263, which acts as the Proton acceptor. Residues aspartate 294–glutamine 298 and arginine 318 contribute to the FMN site.

It belongs to the FMN-dependent alpha-hydroxy acid dehydrogenase family. As to quaternary structure, homotetramer. FMN serves as cofactor.

It carries out the reaction (S)-lactate + O2 = pyruvate + H2O2. The enzyme catalyses 2-hydroxyoctanoate + O2 = 2-oxooctanoate + H2O2. Its function is as follows. Catalyzes the oxidation of (S)-lactate (L-lactate) to pyruvate, with a reduction of O2 to H2O2. To a lesser extent is also able to use 2-hydroxyoctanoate as substrate. May be involved in the utilization of L-lactate as an energy source for growth. This is L-lactate oxidase from Lacticaseibacillus rhamnosus (strain LMS2-1).